The chain runs to 381 residues: 1-deoxy-D-xylulose 5-phosphate reductoisomerase (381 aa).

NADPH-binding residues include T11, G12, S13, I14, K36, N37, and N121. K122 is a binding site for 1-deoxy-D-xylulose 5-phosphate. E123 serves as a coordination point for NADPH. D147 contacts Mn(2+). Residues S148, E149, S173, and H196 each coordinate 1-deoxy-D-xylulose 5-phosphate. Residue E149 participates in Mn(2+) binding. An NADPH-binding site is contributed by G202. 4 residues coordinate 1-deoxy-D-xylulose 5-phosphate: S209, N214, K215, and E218. E218 contacts Mn(2+).

It belongs to the DXR family. Mg(2+) is required as a cofactor. Mn(2+) serves as cofactor.

It carries out the reaction 2-C-methyl-D-erythritol 4-phosphate + NADP(+) = 1-deoxy-D-xylulose 5-phosphate + NADPH + H(+). The protein operates within isoprenoid biosynthesis; isopentenyl diphosphate biosynthesis via DXP pathway; isopentenyl diphosphate from 1-deoxy-D-xylulose 5-phosphate: step 1/6. In terms of biological role, catalyzes the NADPH-dependent rearrangement and reduction of 1-deoxy-D-xylulose-5-phosphate (DXP) to 2-C-methyl-D-erythritol 4-phosphate (MEP). This is 1-deoxy-D-xylulose 5-phosphate reductoisomerase from Acetivibrio thermocellus (strain ATCC 27405 / DSM 1237 / JCM 9322 / NBRC 103400 / NCIMB 10682 / NRRL B-4536 / VPI 7372) (Clostridium thermocellum).